Consider the following 113-residue polypeptide: Protein Rev (113 aa).

Positions 15–23 (LIKFLYQSN) are homomultimerization. The tract at residues 17 to 45 (KFLYQSNPPPSPEGTRQARRNRRRRWRQR) is disordered. The Nuclear localization signal and RNA-binding (RRE) signature appears at 31–47 (TRQARRNRRRRWRQRQR). Over residues 33–45 (QARRNRRRRWRQR) the composition is skewed to basic residues. Residues 70-81 (LQLPPLERLTLD) carry the Nuclear export signal and binding to XPO1 motif. 2 positions are modified to phosphoserine; by host: serine 89 and serine 96. The segment at 89-113 (SGTQGVGSPQILVESPTILESGTKE) is disordered.

The protein belongs to the HIV-1 REV protein family. Homomultimer; when bound to the RRE. Multimeric assembly is essential for activity and may involve XPO1. Binds to human KPNB1, XPO1, TNPO1, RANBP5 and IPO7. Interacts with the viral Integrase. Interacts with human KHDRBS1. Interacts with human NAP1; this interaction decreases Rev multimerization and stimulates its activity. Interacts with human DEAD-box helicases DDX3 and DDX24; these interactions may serve for viral RNA export to the cytoplasm and packaging, respectively. Interacts with human PSIP1; this interaction may inhibit HIV-1 DNA integration by promoting dissociation of the Integrase-LEDGF/p75 complex. Post-translationally, asymmetrically arginine dimethylated at one site by host PRMT6. Methylation impairs the RNA-binding activity and export of viral RNA from the nucleus to the cytoplasm. In terms of processing, phosphorylated by protein kinase CK2. Presence of, and maybe binding to the N-terminus of the regulatory beta subunit of CK2 is necessary for CK2-mediated Rev's phosphorylation.

It localises to the host nucleus. It is found in the host nucleolus. The protein resides in the host cytoplasm. In terms of biological role, escorts unspliced or incompletely spliced viral pre-mRNAs (late transcripts) out of the nucleus of infected cells. These pre-mRNAs carry a recognition sequence called Rev responsive element (RRE) located in the env gene, that is not present in fully spliced viral mRNAs (early transcripts). This function is essential since most viral proteins are translated from unspliced or partially spliced pre-mRNAs which cannot exit the nucleus by the pathway used by fully processed cellular mRNAs. Rev itself is translated from a fully spliced mRNA that readily exits the nucleus. Rev's nuclear localization signal (NLS) binds directly to KPNB1/Importin beta-1 without previous binding to KPNA1/Importin alpha-1. KPNB1 binds to the GDP bound form of RAN (Ran-GDP) and targets Rev to the nucleus. In the nucleus, the conversion from Ran-GDP to Ran-GTP dissociates Rev from KPNB1 and allows Rev's binding to the RRE in viral pre-mRNAs. Rev multimerization on the RRE via cooperative assembly exposes its nuclear export signal (NES) to the surface. Rev can then form a complex with XPO1/CRM1 and Ran-GTP, leading to nuclear export of the complex. Conversion from Ran-GTP to Ran-GDP mediates dissociation of the Rev/RRE/XPO1/RAN complex, so that Rev can return to the nucleus for a subsequent round of export. Beside KPNB1, also seems to interact with TNPO1/Transportin-1, RANBP5/IPO5 and IPO7/RANBP7 for nuclear import. The nucleoporin-like HRB/RIP is an essential cofactor that probably indirectly interacts with Rev to release HIV RNAs from the perinuclear region to the cytoplasm. This chain is Protein Rev, found in Human immunodeficiency virus type 1 group M subtype B (isolate JH32) (HIV-1).